The chain runs to 152 residues: Transcriptional regulator MraZ (152 aa).

2 consecutive SpoVT-AbrB domains span residues 5 to 52 (TSAI…PLPE) and 81 to 124 (ASDC…HDTA).

This sequence belongs to the MraZ family. In terms of assembly, forms oligomers.

The protein localises to the cytoplasm. The protein resides in the nucleoid. This Colwellia psychrerythraea (strain 34H / ATCC BAA-681) (Vibrio psychroerythus) protein is Transcriptional regulator MraZ.